A 69-amino-acid chain; its full sequence is Large ribosomal subunit protein bL31 (69 aa).

Zn(2+)-binding residues include cysteine 16, cysteine 18, cysteine 37, and cysteine 40.

This sequence belongs to the bacterial ribosomal protein bL31 family. Type A subfamily. As to quaternary structure, part of the 50S ribosomal subunit. Zn(2+) is required as a cofactor.

Functionally, binds the 23S rRNA. In Syntrophotalea carbinolica (strain DSM 2380 / NBRC 103641 / GraBd1) (Pelobacter carbinolicus), this protein is Large ribosomal subunit protein bL31.